A 52-amino-acid polypeptide reads, in one-letter code: Venom peptide 4a (52 aa).

The first 23 residues, 1–23 (MRSAILLVIVAIVAILGFLGVNA), serve as a signal peptide directing secretion. 3 AXPX repeats span residues 23-26 (AEPL), 31-34 (AEPN), and 39-42 (AAPL). Positions 24–41 (EPLPSPLAEPNPHAKAAP) are excised as a propeptide. Ala-51 is modified (alanine amide).

Expressed by the venom gland.

The protein resides in the secreted. This is Venom peptide 4a from Eumenes pomiformis (Potter wasp).